The primary structure comprises 240 residues: Glycerol uptake facilitator protein 3 (240 aa).

2 helical membrane-spanning segments follow: residues Leu11–Val31 and Ala41–Ser61. Residues Asn70–Ala72 carry the NPA 1 motif. 3 helical membrane-spanning segments follow: residues Val88–Leu108, Phe137–Phe157, and Phe162–Leu182. The NPA 2 motif lies at Asn191–Ala193. A helical transmembrane segment spans residues Trp219–Leu239.

Belongs to the MIP/aquaporin (TC 1.A.8) family.

It localises to the cell membrane. Transporter that facilitates the transmembrane diffusion of water, dihydroxyacetone, glycerol and H(2)O(2). Is not permeable to urea and D/L-lactic acid. In Lactiplantibacillus plantarum (strain ATCC BAA-793 / NCIMB 8826 / WCFS1) (Lactobacillus plantarum), this protein is Glycerol uptake facilitator protein 3.